The sequence spans 411 residues: Serine hydroxymethyltransferase (411 aa).

Residues L117 and 121–123 (GHL) each bind (6S)-5,6,7,8-tetrahydrofolate. The residue at position 226 (K226) is an N6-(pyridoxal phosphate)lysine. (6S)-5,6,7,8-tetrahydrofolate-binding positions include E241 and 349-351 (SPF).

The protein belongs to the SHMT family. Homodimer. Requires pyridoxal 5'-phosphate as cofactor.

It localises to the cytoplasm. The catalysed reaction is (6R)-5,10-methylene-5,6,7,8-tetrahydrofolate + glycine + H2O = (6S)-5,6,7,8-tetrahydrofolate + L-serine. Its pathway is one-carbon metabolism; tetrahydrofolate interconversion. The protein operates within amino-acid biosynthesis; glycine biosynthesis; glycine from L-serine: step 1/1. Its function is as follows. Catalyzes the reversible interconversion of serine and glycine with tetrahydrofolate (THF) serving as the one-carbon carrier. This reaction serves as the major source of one-carbon groups required for the biosynthesis of purines, thymidylate, methionine, and other important biomolecules. Also exhibits THF-independent aldolase activity toward beta-hydroxyamino acids, producing glycine and aldehydes, via a retro-aldol mechanism. The polypeptide is Serine hydroxymethyltransferase (Oceanobacillus iheyensis (strain DSM 14371 / CIP 107618 / JCM 11309 / KCTC 3954 / HTE831)).